Consider the following 184-residue polypeptide: Large ribosomal subunit protein uL5 (184 aa).

The protein belongs to the universal ribosomal protein uL5 family. In terms of assembly, part of the 50S ribosomal subunit; part of the 5S rRNA/L5/L18/L25 subcomplex. Contacts the 5S rRNA and the P site tRNA. Forms a bridge to the 30S subunit in the 70S ribosome.

Its function is as follows. This is one of the proteins that bind and probably mediate the attachment of the 5S RNA into the large ribosomal subunit, where it forms part of the central protuberance. In the 70S ribosome it contacts protein S13 of the 30S subunit (bridge B1b), connecting the 2 subunits; this bridge is implicated in subunit movement. Contacts the P site tRNA; the 5S rRNA and some of its associated proteins might help stabilize positioning of ribosome-bound tRNAs. The protein is Large ribosomal subunit protein uL5 of Ureaplasma urealyticum serovar 10 (strain ATCC 33699 / Western).